Reading from the N-terminus, the 125-residue chain is Small ribosomal subunit protein bS6 (125 aa).

The interval 100–125 (SPMVKAREERKPLTEVENNDFEDAEE) is disordered. A compositionally biased stretch (basic and acidic residues) spans 104–113 (KAREERKPLT). Acidic residues predominate over residues 116–125 (ENNDFEDAEE).

Belongs to the bacterial ribosomal protein bS6 family.

Binds together with bS18 to 16S ribosomal RNA. The protein is Small ribosomal subunit protein bS6 of Histophilus somni (strain 129Pt) (Haemophilus somnus).